A 228-amino-acid polypeptide reads, in one-letter code: UPF0758 protein MW1604 (228 aa).

Residues K102–F224 enclose the MPN domain. H173, H175, and D186 together coordinate Zn(2+). The JAMM motif motif lies at H173–D186.

This sequence belongs to the UPF0758 family.

The protein is UPF0758 protein MW1604 of Staphylococcus aureus (strain MW2).